The chain runs to 388 residues: Succinate--CoA ligase [ADP-forming] subunit beta (388 aa).

Residues 9–244 (KEIFRSMGVA…LEEEDPKEIE (236 aa)) enclose the ATP-grasp domain. ATP is bound by residues Lys46, 53–55 (GRG), Glu99, Cys102, and Glu107. The Mg(2+) site is built by Asn199 and Asp213. Substrate-binding positions include Asn264 and 321–323 (GIM).

Belongs to the succinate/malate CoA ligase beta subunit family. Heterotetramer of two alpha and two beta subunits. The cofactor is Mg(2+).

The catalysed reaction is succinate + ATP + CoA = succinyl-CoA + ADP + phosphate. It carries out the reaction GTP + succinate + CoA = succinyl-CoA + GDP + phosphate. It functions in the pathway carbohydrate metabolism; tricarboxylic acid cycle; succinate from succinyl-CoA (ligase route): step 1/1. Functionally, succinyl-CoA synthetase functions in the citric acid cycle (TCA), coupling the hydrolysis of succinyl-CoA to the synthesis of either ATP or GTP and thus represents the only step of substrate-level phosphorylation in the TCA. The beta subunit provides nucleotide specificity of the enzyme and binds the substrate succinate, while the binding sites for coenzyme A and phosphate are found in the alpha subunit. The protein is Succinate--CoA ligase [ADP-forming] subunit beta of Staphylococcus aureus (strain Mu3 / ATCC 700698).